The following is a 205-amino-acid chain: MSDPSSINGGIVVAMTGKDCVAIACDLRLGSQSLGVSNKFEKIFHYGHVFLGITGLATDVTTLNEMFRYKTNLYKLKEERAIEPETFTQLVSSSLYERRFGPYFVGPVVAGINSKSGKPFIAGFDLIGCIDEAKDFIVSGTASDQLFGMCESLYEPNLEPEDLFETISQALLNAADRDALSGWGAVVYIIKKDEVVKRYLKMRQD.

Serine 31 bears the Phosphoserine mark. Lysine 70 participates in a covalent cross-link: Glycyl lysine isopeptide (Lys-Gly) (interchain with G-Cter in ubiquitin).

This sequence belongs to the peptidase T1B family. In terms of assembly, the 26S proteasome consists of a 20S proteasome core and two 19S regulatory subunits. The 20S proteasome core is composed of 28 subunits that are arranged in four stacked rings, resulting in a barrel-shaped structure. The two end rings are each formed by seven alpha subunits, and the two central rings are each formed by seven beta subunits. The catalytic chamber with the active sites is on the inside of the barrel.

Its subcellular location is the cytoplasm. It localises to the nucleus. In terms of biological role, non-catalytic component of the proteasome which degrades poly-ubiquitinated proteins in the cytoplasm and in the nucleus. It is essential for the regulated turnover of proteins and for the removal of misfolded proteins. The proteasome is a multicatalytic proteinase complex that is characterized by its ability to cleave peptides with Arg, Phe, Tyr, Leu, and Glu adjacent to the leaving group at neutral or slightly basic pH. It has an ATP-dependent proteolytic activity. This subunit may participate in the trypsin-like activity of the enzyme complex. This Saccharomyces cerevisiae (strain ATCC 204508 / S288c) (Baker's yeast) protein is Proteasome subunit beta type-3 (PUP3).